The primary structure comprises 202 residues: Outer-membrane lipoprotein carrier protein (202 aa).

The first 18 residues, 1–18 (MNRLFLILLLIFSHEVFS), serve as a signal peptide directing secretion.

This sequence belongs to the LolA family. As to quaternary structure, monomer.

It is found in the periplasm. Its function is as follows. Participates in the translocation of lipoproteins from the inner membrane to the outer membrane. Only forms a complex with a lipoprotein if the residue after the N-terminal Cys is not an aspartate (The Asp acts as a targeting signal to indicate that the lipoprotein should stay in the inner membrane). The protein is Outer-membrane lipoprotein carrier protein of Legionella pneumophila (strain Lens).